We begin with the raw amino-acid sequence, 144 residues long: Large ribosomal subunit protein uL15 (144 aa).

The segment at 1 to 51 is disordered; sequence MRLNTIKPGAGSKSAGKRVGRGIGSGLGKTCGRGHKGQKSRAGGFHKVGFE. The span at 21-31 shows a compositional bias: gly residues; sequence RGIGSGLGKTC.

The protein belongs to the universal ribosomal protein uL15 family. Part of the 50S ribosomal subunit.

In terms of biological role, binds to the 23S rRNA. In Azoarcus sp. (strain BH72), this protein is Large ribosomal subunit protein uL15.